The following is a 395-amino-acid chain: MGSGIAAVLLSLAVALARVPAGEGEYVPVERSLTRVNPGRFRGAHLPPLEQKTDPPDVRRVYHVQPFVENPFQTPSVPVAVYYAVLERACRSVLLWAPTEAVQVVRGAPEATRSDARYNLTVAWYRTSDDCAIPILVMEYAECQYDKPLGACPVRNLPRWSFYDSFSATGDDDLGLLMHAPAFETAGTYVRLVKVNGWVEVTQFIFEHRGKGPCRYTLPLRILPAACLRAPVFEQGVTVDAIGMLPRFIPENQRIVAVYSLQAAGWHGPKAPFTSTLLPPEVVETANVTRPELAPEERGTSRTPGDEPAPAVAAQLPPNWHVPEASDVTIQGPAPAPSGHTGAVVGALAGAGLAAGVVVLAVYLVRRRGRAAGKHVRLPELLEEAHGPARRGAPY.

Residues 1–17 (MGSGIAAVLLSLAVALA) form the signal peptide. Topologically, residues 18–342 (RVPAGEGEYV…PAPAPSGHTG (325 aa)) are virion surface. Histidine 63 is a binding site for Zn(2+). 3 cysteine pairs are disulfide-bonded: cysteine 90–cysteine 214, cysteine 131–cysteine 227, and cysteine 143–cysteine 152. Asparagine 119 carries N-linked (GlcNAc...) asparagine; by host glycosylation. Aspartate 240 lines the Zn(2+) pocket. A profusion region spans residues 261 to 306 (LQAAGWHGPKAPFTSTLLPPEVVETANVTRPELAPEERGTSRTPGD). A glycan (N-linked (GlcNAc...) asparagine; by host) is linked at asparagine 287. A disordered region spans residues 289-314 (TRPELAPEERGTSRTPGDEPAPAVAA). The helical transmembrane segment at 343–362 (AVVGALAGAGLAAGVVVLAV) threads the bilayer. The Intravirion segment spans residues 363–395 (YLVRRRGRAAGKHVRLPELLEEAHGPARRGAPY).

The protein belongs to the herpesviridae glycoprotein D family.

It is found in the virion membrane. Functionally, envelope glycoprotein that binds to host cell entry receptors, promoting the virus entry into host cells. May trigger fusion with host membrane, by recruiting the fusion machinery composed of gB and gH/gL. This is Envelope glycoprotein D (gD) from Cercopithecine herpesvirus 1 (CeHV-1).